A 255-amino-acid chain; its full sequence is uncharacterized protein (255 aa).

Positions 1–18 (MRILIILSIILCSLFTKA) are cleaved as a signal peptide.

Belongs to the MlaA family.

This is an uncharacterized protein from Rickettsia bellii (strain RML369-C).